A 670-amino-acid polypeptide reads, in one-letter code: Zinc finger and BTB domain-containing protein 5 (670 aa).

A BTB domain is found at 24 to 93 (CDCVIVVGNR…MYTSTLMLGE (70 aa)). Disordered regions lie at residues 158 to 256 (LSSS…QEDG) and 268 to 382 (EDAQ…SSTD). The segment covering 170 to 181 (PMSSSMRSSLDQ) has biased composition (polar residues). A Phosphoserine modification is found at serine 234. Lysine 239 is covalently cross-linked (Glycyl lysine isopeptide (Lys-Gly) (interchain with G-Cter in SUMO2)). The segment covering 285–295 (SRATQVETSFE) has biased composition (polar residues). Glycyl lysine isopeptide (Lys-Gly) (interchain with G-Cter in SUMO2) cross-links involve residues lysine 317 and lysine 325. Low complexity predominate over residues 345 to 360 (AEGSESVEVEGVVVSA). The segment covering 361–374 (EKIDLSPESSDRSF) has biased composition (basic and acidic residues). Serine 366 is modified (phosphoserine). Residues lysine 399 and lysine 410 each participate in a glycyl lysine isopeptide (Lys-Gly) (interchain with G-Cter in SUMO2) cross-link. A compositionally biased stretch (polar residues) spans 414–432 (SNFSASQSTDDNLPNTTSD). 2 disordered regions span residues 414–433 (SNFS…TSDC) and 442–470 (LLSP…EPAD). The span at 444–459 (SPEAGPAGGPSSAPGS) shows a compositional bias: low complexity. Residues lysine 535, lysine 587, and lysine 590 each participate in a glycyl lysine isopeptide (Lys-Gly) (interchain with G-Cter in SUMO2) cross-link. The C2H2-type 1 zinc finger occupies 606–628 (YACKICCKTFLTLTDCKKHIRVH). The segment at 634–657 (YACLKCGKRFSQSSHLYKHSKTTC) adopts a C2H2-type 2; atypical zinc-finger fold. Residues lysine 638 and lysine 651 each participate in a glycyl lysine isopeptide (Lys-Gly) (interchain with G-Cter in SUMO2) cross-link.

It localises to the nucleus. Its function is as follows. May be involved in transcriptional regulation. This is Zinc finger and BTB domain-containing protein 5 (Zbtb5) from Mus musculus (Mouse).